The chain runs to 222 residues: GTP cyclohydrolase 1 (222 aa).

Positions 111, 114, and 182 each coordinate Zn(2+).

This sequence belongs to the GTP cyclohydrolase I family. Toroid-shaped homodecamer, composed of two pentamers of five dimers.

It carries out the reaction GTP + H2O = 7,8-dihydroneopterin 3'-triphosphate + formate + H(+). It participates in cofactor biosynthesis; 7,8-dihydroneopterin triphosphate biosynthesis; 7,8-dihydroneopterin triphosphate from GTP: step 1/1. This is GTP cyclohydrolase 1 from Enterobacter sp. (strain 638).